Consider the following 143-residue polypeptide: SsrA-binding protein (143 aa).

This sequence belongs to the SmpB family.

The protein resides in the cytoplasm. Required for rescue of stalled ribosomes mediated by trans-translation. Binds to transfer-messenger RNA (tmRNA), required for stable association of tmRNA with ribosomes. tmRNA and SmpB together mimic tRNA shape, replacing the anticodon stem-loop with SmpB. tmRNA is encoded by the ssrA gene; the 2 termini fold to resemble tRNA(Ala) and it encodes a 'tag peptide', a short internal open reading frame. During trans-translation Ala-aminoacylated tmRNA acts like a tRNA, entering the A-site of stalled ribosomes, displacing the stalled mRNA. The ribosome then switches to translate the ORF on the tmRNA; the nascent peptide is terminated with the 'tag peptide' encoded by the tmRNA and targeted for degradation. The ribosome is freed to recommence translation, which seems to be the essential function of trans-translation. This is SsrA-binding protein from Mycoplasmoides gallisepticum (strain R(low / passage 15 / clone 2)) (Mycoplasma gallisepticum).